The sequence spans 251 residues: uncharacterized protein (251 aa).

Disordered stretches follow at residues 1–92 (MGRP…PGSA) and 137–251 (KPTP…LRTH). Residues 69 to 92 (AEGAPALLGGSPSSGSPGHPPGSA) are compositionally biased toward low complexity. Over residues 155-172 (SESSWQLPQLPAGSTSGS) the composition is skewed to polar residues.

This is an uncharacterized protein from Homo sapiens (Human).